Reading from the N-terminus, the 291-residue chain is Nucleotide-binding protein PPA0813 (291 aa).

17–24 provides a ligand contact to ATP; that stretch reads GISGAGRR. 66 to 69 contributes to the GTP binding site; the sequence is DVRS.

The protein belongs to the RapZ-like family.

Displays ATPase and GTPase activities. The sequence is that of Nucleotide-binding protein PPA0813 from Cutibacterium acnes (strain DSM 16379 / KPA171202) (Propionibacterium acnes).